Here is an 83-residue protein sequence, read N- to C-terminus: Large ribosomal subunit protein eL43 (83 aa).

Residues Cys38, Cys41, Cys56, and Cys59 each contribute to the Zn(2+) site. A C4-type zinc finger spans residues 38-59; that stretch reads CPVCGRRAVKRISTGIWQCTKC.

It belongs to the eukaryotic ribosomal protein eL43 family. Putative zinc-binding subfamily. As to quaternary structure, part of the 50S ribosomal subunit. Zn(2+) serves as cofactor.

Functionally, binds to the 23S rRNA. The polypeptide is Large ribosomal subunit protein eL43 (Pyrococcus horikoshii (strain ATCC 700860 / DSM 12428 / JCM 9974 / NBRC 100139 / OT-3)).